The chain runs to 152 residues: SMN complex subunit smn1 (152 aa).

An interacts with yip11/gem2 region spans residues 26–51; that stretch reads KKYHSIEAKGGVSDPDSRLDGEKLIS. Positions 88–110 are disordered; the sequence is DNKGLSDEKPETRAAETHQEFME. The segment covering 91–108 has biased composition (basic and acidic residues); the sequence is GLSDEKPETRAAETHQEF. A may interact with gem8 region spans residues 130-152; it reads SWYYAGYYTGLAEGLAKSEQRKD.

Belongs to the SMN family. As to quaternary structure, homooligomer; may form homodimers and homotetramers. Part of the core SMN complex at least composed of smn1, yip11/gem2, gem6, gem7 and gem8. Part of the SMN-Sm complex. Interacts with yip11/gem2; the interaction is direct. Interacts with gem8; the interaction is direct. Interacts with proteins of the Sm complex, including smn1, smb1, smd1, smd2 and smd3.

It localises to the nucleus. The SMN complex catalyzes the assembly of small nuclear ribonucleoproteins (snRNPs), the building blocks of the spliceosome, and thereby plays an important role in the splicing of cellular pre-mRNAs. Most spliceosomal snRNPs contain a common set of Sm proteins smb1, smd1, smd2, smd3, sme1, smf1 and smg1 that assemble in a heptameric protein ring on the Sm site of the small nuclear RNA to form the core snRNP (Sm core). In the cytosol, the Sm proteins smd1, smd2, sme1, smf1 and smg1 (5Sm) are trapped in an inactive 6S pICln-Sm complex by the chaperone saf5 that controls the assembly of the core snRNP. To assemble core snRNPs, the SMN complex accepts the trapped 5Sm proteins from saf5 forming an intermediate. Binding of snRNA inside 5Sm triggers eviction of the SMN complex, thereby allowing binding of smd3 and smb1 to complete assembly of the core snRNP. Within the SMN complex, smn1 acts as a structural backbone and together with yip11/gem2 it gathers the Sm complex subunits. This Schizosaccharomyces pombe (strain 972 / ATCC 24843) (Fission yeast) protein is SMN complex subunit smn1.